The chain runs to 159 residues: Cyclic pyranopterin monophosphate synthase (159 aa).

Substrate-binding positions include 75–77 (LCH) and 113–114 (ME). The active site involves Asp-128.

The protein belongs to the MoaC family. Homohexamer; trimer of dimers.

The enzyme catalyses (8S)-3',8-cyclo-7,8-dihydroguanosine 5'-triphosphate = cyclic pyranopterin phosphate + diphosphate. The protein operates within cofactor biosynthesis; molybdopterin biosynthesis. Functionally, catalyzes the conversion of (8S)-3',8-cyclo-7,8-dihydroguanosine 5'-triphosphate to cyclic pyranopterin monophosphate (cPMP). The polypeptide is Cyclic pyranopterin monophosphate synthase (Yersinia pseudotuberculosis serotype O:1b (strain IP 31758)).